A 446-amino-acid polypeptide reads, in one-letter code: Maturase K (446 aa).

This sequence belongs to the intron maturase 2 family. MatK subfamily.

The protein resides in the plastid. Its subcellular location is the chloroplast. In terms of biological role, usually encoded in the trnK tRNA gene intron. Probably assists in splicing its own and other chloroplast group II introns. The sequence is that of Maturase K from Phalaenopsis aphrodite subsp. formosana (Moth orchid).